The following is a 209-amino-acid chain: MGKFQVLDHPLIQHKLTIIRNKDCGTRSFREVVNEISTLMAYEVSRDMPLQDKTIETPVAKMTAKELAGKKVAIVPILRAGIGMVDGILELIPAAKVGHIGMYRDEETLQPHEYFVKLPSDIGQRQVFVVDPMLATGGSAIMAIDALKKRGASNIKFVCLVSAPEGVKALREKHPDIDIYTAALDDRLNEDGYIVPGLGDAGDRLFGTK.

Residues Arg-79, Arg-104, and 131–139 each bind 5-phospho-alpha-D-ribose 1-diphosphate; that span reads DPMLATGGS. Residues Ile-194 and 199–201 contribute to the uracil site; that span reads GDA. Asp-200 provides a ligand contact to 5-phospho-alpha-D-ribose 1-diphosphate.

The protein belongs to the UPRTase family. Mg(2+) serves as cofactor.

It catalyses the reaction UMP + diphosphate = 5-phospho-alpha-D-ribose 1-diphosphate + uracil. Its pathway is pyrimidine metabolism; UMP biosynthesis via salvage pathway; UMP from uracil: step 1/1. Allosterically activated by GTP. Its function is as follows. Catalyzes the conversion of uracil and 5-phospho-alpha-D-ribose 1-diphosphate (PRPP) to UMP and diphosphate. The protein is Uracil phosphoribosyltransferase of Levilactobacillus brevis (strain ATCC 367 / BCRC 12310 / CIP 105137 / JCM 1170 / LMG 11437 / NCIMB 947 / NCTC 947) (Lactobacillus brevis).